Here is a 313-residue protein sequence, read N- to C-terminus: Homeobox protein knotted-1-like 2 (313 aa).

The disordered stretch occupies residues D13–E40. A compositionally biased stretch (low complexity) spans P14–S27. Residues P28 to G38 are compositionally biased toward gly residues. In terms of domain architecture, ELK spans E205–I225. The segment at residues L226–N289 is a DNA-binding region (homeobox; TALE-type). The disordered stretch occupies residues R282–W313.

The protein belongs to the TALE/KNOX homeobox family. In terms of tissue distribution, isoform 1 is expressed in roots, leaf blades, leaf sheaths and flowers. Isoform 2 is expressed in leaf blades, leaf sheaths and flowers.

It is found in the nucleus. This is Homeobox protein knotted-1-like 2 (HOS58) from Oryza sativa subsp. japonica (Rice).